We begin with the raw amino-acid sequence, 627 residues long: 1-deoxy-D-xylulose-5-phosphate synthase (627 aa).

Thiamine diphosphate-binding positions include His80 and 121 to 123 (GHS). Asp152 lines the Mg(2+) pocket. Thiamine diphosphate contacts are provided by residues 153 to 154 (GA), Asn181, Tyr288, and Glu370. A Mg(2+)-binding site is contributed by Asn181.

It belongs to the transketolase family. DXPS subfamily. Homodimer. Mg(2+) is required as a cofactor. The cofactor is thiamine diphosphate.

The enzyme catalyses D-glyceraldehyde 3-phosphate + pyruvate + H(+) = 1-deoxy-D-xylulose 5-phosphate + CO2. Its pathway is metabolic intermediate biosynthesis; 1-deoxy-D-xylulose 5-phosphate biosynthesis; 1-deoxy-D-xylulose 5-phosphate from D-glyceraldehyde 3-phosphate and pyruvate: step 1/1. Catalyzes the acyloin condensation reaction between C atoms 2 and 3 of pyruvate and glyceraldehyde 3-phosphate to yield 1-deoxy-D-xylulose-5-phosphate (DXP). In Aliivibrio salmonicida (strain LFI1238) (Vibrio salmonicida (strain LFI1238)), this protein is 1-deoxy-D-xylulose-5-phosphate synthase.